The following is a 265-amino-acid chain: Leucyl/phenylalanyl-tRNA--protein transferase (265 aa).

Residues 244–265 (LDTGPDPASSSVTEISLRPAAP) are disordered.

The protein belongs to the L/F-transferase family.

The protein resides in the cytoplasm. The catalysed reaction is N-terminal L-lysyl-[protein] + L-leucyl-tRNA(Leu) = N-terminal L-leucyl-L-lysyl-[protein] + tRNA(Leu) + H(+). The enzyme catalyses N-terminal L-arginyl-[protein] + L-leucyl-tRNA(Leu) = N-terminal L-leucyl-L-arginyl-[protein] + tRNA(Leu) + H(+). It catalyses the reaction L-phenylalanyl-tRNA(Phe) + an N-terminal L-alpha-aminoacyl-[protein] = an N-terminal L-phenylalanyl-L-alpha-aminoacyl-[protein] + tRNA(Phe). Its function is as follows. Functions in the N-end rule pathway of protein degradation where it conjugates Leu, Phe and, less efficiently, Met from aminoacyl-tRNAs to the N-termini of proteins containing an N-terminal arginine or lysine. In Methylibium petroleiphilum (strain ATCC BAA-1232 / LMG 22953 / PM1), this protein is Leucyl/phenylalanyl-tRNA--protein transferase.